The sequence spans 235 residues: 2-C-methyl-D-erythritol 4-phosphate cytidylyltransferase (235 aa).

It belongs to the IspD/TarI cytidylyltransferase family. IspD subfamily.

It carries out the reaction 2-C-methyl-D-erythritol 4-phosphate + CTP + H(+) = 4-CDP-2-C-methyl-D-erythritol + diphosphate. Its pathway is isoprenoid biosynthesis; isopentenyl diphosphate biosynthesis via DXP pathway; isopentenyl diphosphate from 1-deoxy-D-xylulose 5-phosphate: step 2/6. Catalyzes the formation of 4-diphosphocytidyl-2-C-methyl-D-erythritol from CTP and 2-C-methyl-D-erythritol 4-phosphate (MEP). This Synechococcus sp. (strain JA-3-3Ab) (Cyanobacteria bacterium Yellowstone A-Prime) protein is 2-C-methyl-D-erythritol 4-phosphate cytidylyltransferase.